The sequence spans 358 residues: Peptide chain release factor 1 (358 aa).

Position 232 is an N5-methylglutamine (glutamine 232).

It belongs to the prokaryotic/mitochondrial release factor family. Methylated by PrmC. Methylation increases the termination efficiency of RF1.

The protein localises to the cytoplasm. Its function is as follows. Peptide chain release factor 1 directs the termination of translation in response to the peptide chain termination codons UAG and UAA. The protein is Peptide chain release factor 1 of Acidobacterium capsulatum (strain ATCC 51196 / DSM 11244 / BCRC 80197 / JCM 7670 / NBRC 15755 / NCIMB 13165 / 161).